We begin with the raw amino-acid sequence, 405 residues long: MIIHPKVRGFICTTTHPLGCERNVLEQIAATRARGVRNDGPKKVLVIGASSGYGLASRITAAFGFGADTLGVFFEKPGTASKAGTAGWYNSAAFDKHAKAAGLYSKSINGDAFSDAARAQVIELIKTEMGGQVDLVVYSLASPVRKLPGSGEVKRSALKPIGQTYTATAIDTNKDTIIQASIEPASAQEIEDTITVMGGQDWELWIDALEGAGVLADGARSVAFSYIGTEITWPIYWHGALGKAKVDLDRTAQRLNARLAKHGGGANVAVLKSVVTQASAAIPVMPLYISMVYKIMKEKGLHEGTIEQLDRLFRERLYRQDGQPAEVDEVDEQNRLRLDDWELRDDVQDACKALWPQVTTENLFELTDYAGYKHEFLKLFGFGRTDVDYDADVATDVAFDCIELV.

Residues 48 to 53 (GASSGY), 74 to 75 (FE), 111 to 112 (DA), and 140 to 141 (LA) contribute to the NAD(+) site. Substrate is bound at residue tyrosine 226. The Proton donor role is filled by tyrosine 236. NAD(+) is bound by residues lysine 245 and 274-276 (VVT).

This sequence belongs to the TER reductase family. As to quaternary structure, monomer.

It carries out the reaction a 2,3-saturated acyl-[ACP] + NAD(+) = a (2E)-enoyl-[ACP] + NADH + H(+). Its pathway is lipid metabolism; fatty acid biosynthesis. Its function is as follows. Involved in the final reduction of the elongation cycle of fatty acid synthesis (FAS II). Catalyzes the reduction of a carbon-carbon double bond in an enoyl moiety that is covalently linked to an acyl carrier protein (ACP). The protein is Enoyl-[acyl-carrier-protein] reductase [NADH] of Xanthomonas oryzae pv. oryzae (strain PXO99A).